Here is a 128-residue protein sequence, read N- to C-terminus: Azurin (128 aa).

The Plastocyanin-like domain occupies 1–128 (AECSVDIQGN…AMMKGTLTLK (128 aa)). Histidine 46, cysteine 112, histidine 117, and methionine 121 together coordinate Cu cation.

The protein localises to the periplasm. Its function is as follows. Transfers electrons from cytochrome c551 to cytochrome oxidase. This chain is Azurin, found in Pseudomonas denitrificans.